The sequence spans 439 residues: MGSTCIAMAPRTLLLLIGCQLVFGFNEPLNIVSHLNDDWFLFGDSRSDCTYVENNGHPKLDWLDLDPKLCNSGKISAKSGNSLFRSFHFTDFYNYTGEGDQIVFYEGVNFSPNHGFKCLAYGDNKRWMGNKARFYARVYEKMAQYRSLSFVNVPYAYGGKAKPTSICKHKTLTLNNPTFISKESNYVDYYYESEANFTLAGCDEFIVPLCVFNGHSKGSSSDPANKYYMDSQSYYNMDTGVLYGFNSTLDVGNTAKDPGLDLTCRYLALTPGNYKAVSLEYLLSLPSKAICLRKPKRFMPVQVVDSRWNSTRQSDNMTAVACQLPYCFFRNTSADYSGGTHDVHHGDFHFRQLLSGLLLNVSCIAQQGAFLYNNVSSSWPAYGYGQCPTAANIGYMAPVCIYDPLPVVLLGVLLGIAVLIIVFLILYFMTDSGVRLHEA.

The first 22 residues, 1 to 22, serve as a signal peptide directing secretion; sequence MGSTCIAMAPRTLLLLIGCQLV. An esterase domain 1 region spans residues 12 to 132; it reads TLLLLIGCQL…DNKRWMGNKA (121 aa). Topologically, residues 23 to 407 are virion surface; sequence FGFNEPLNIV…PVCIYDPLPV (385 aa). Catalysis depends on Ser-45, which acts as the Nucleophile. Cys-49 and Cys-70 are joined by a disulfide. Asn-94 carries an N-linked (GlcNAc...) asparagine; by host glycan. Cys-118 and Cys-167 are oxidised to a cystine. The tract at residues 133–281 is receptor binding; sequence RFYARVYEKM…GNYKAVSLEY (149 aa). Residues Asn-196, Asn-246, Asn-309, and Asn-316 are each glycosylated (N-linked (GlcNAc...) asparagine; by host). 2 disulfides stabilise this stretch: Cys-202–Cys-291 and Cys-210–Cys-264. The segment at 282–395 is esterase domain 2; that stretch reads LLSLPSKAIC…QCPTAANIGY (114 aa). An intrachain disulfide couples Cys-322 to Cys-327. Asn-331 is a glycosylation site (N-linked (GlcNAc...) asparagine; by host). Residues Asp-342 and His-345 each act as charge relay system in the active site. 2 N-linked (GlcNAc...) asparagine; by host glycosylation sites follow: Asn-360 and Asn-374. Cysteines 363 and 387 form a disulfide. A helical membrane pass occupies residues 408-428; it reads VLLGVLLGIAVLIIVFLILYF. Over 429-439 the chain is Intravirion; the sequence is MTDSGVRLHEA.

This sequence belongs to the influenza type C/coronaviruses hemagglutinin-esterase family. In terms of assembly, homodimer; disulfide-linked. Forms a complex with the M protein in the pre-Golgi. Associates then with S-M complex to form a ternary complex S-M-HE. In terms of processing, N-glycosylated in the host RER.

The protein localises to the virion membrane. Its subcellular location is the host cell membrane. It carries out the reaction N-acetyl-9-O-acetylneuraminate + H2O = N-acetylneuraminate + acetate + H(+). It catalyses the reaction N-acetyl-4-O-acetylneuraminate + H2O = N-acetylneuraminate + acetate + H(+). Its function is as follows. Structural protein that makes short spikes at the surface of the virus. Contains receptor binding and receptor-destroying activities. Mediates de-O-acetylation of N-acetyl-4-O-acetylneuraminic acid, which is probably the receptor determinant recognized by the virus on the surface of erythrocytes and susceptible cells. This receptor-destroying activity is important for virus release as it probably helps preventing self-aggregation and ensures the efficient spread of the progeny virus from cell to cell. May serve as a secondary viral attachment protein for initiating infection, the spike protein being the major one. May become a target for both the humoral and the cellular branches of the immune system. The sequence is that of Hemagglutinin-esterase from Murine coronavirus (strain JHM) (MHV-JHM).